An 85-amino-acid chain; its full sequence is uncharacterized protein (85 aa).

Positions 1–85 (MRWRPSSWSA…DQEQCGQHCR (85 aa)) are disordered. Positions 47-61 (ASVEGEGGRHADRHG) are enriched in basic and acidic residues.

This is an uncharacterized protein from Streptomyces lividans.